The chain runs to 355 residues: Oligopeptide transport ATP-binding protein AmiE (355 aa).

In terms of domain architecture, ABC transporter spans 9 to 260; that stretch reads LTARDIVVEF…PRHPYTWSLL (252 aa). 45-52 provides a ligand contact to ATP; sequence GESGSGKS.

Belongs to the ABC transporter superfamily.

It localises to the cell membrane. Its function is as follows. Part of the binding-protein-dependent transport system for oligopeptides. Probably responsible for energy coupling to the transport system. The chain is Oligopeptide transport ATP-binding protein AmiE (amiE) from Streptococcus pneumoniae serotype 4 (strain ATCC BAA-334 / TIGR4).